The sequence spans 634 residues: DNA-directed RNA polymerase subunit gamma (634 aa).

Residues Cys-74, Cys-76, Cys-89, and Cys-92 each coordinate Zn(2+). Mg(2+)-binding residues include Asp-471, Asp-473, and Asp-475.

The protein belongs to the RNA polymerase beta' chain family. RpoC1 subfamily. In cyanobacteria the RNAP catalytic core is composed of 2 alpha, 1 beta, 1 beta', 1 gamma and 1 omega subunit. When a sigma factor is associated with the core the holoenzyme is formed, which can initiate transcription. Mg(2+) serves as cofactor. It depends on Zn(2+) as a cofactor.

The catalysed reaction is RNA(n) + a ribonucleoside 5'-triphosphate = RNA(n+1) + diphosphate. In terms of biological role, DNA-dependent RNA polymerase catalyzes the transcription of DNA into RNA using the four ribonucleoside triphosphates as substrates. The chain is DNA-directed RNA polymerase subunit gamma from Prochlorococcus marinus (strain MIT 9303).